Consider the following 420-residue polypeptide: Probable endo-beta-1,4-glucanase celB (420 aa).

A signal peptide spans 1–18 (MLRKLTPLALALLPLVAG). N-linked (GlcNAc...) asparagine glycosylation is present at Asn-118. Catalysis depends on Glu-215, which acts as the Nucleophile. Catalysis depends on Glu-220, which acts as the Proton donor. Residues Asn-234, Asn-293, and Asn-383 are each glycosylated (N-linked (GlcNAc...) asparagine).

It belongs to the glycosyl hydrolase 7 (cellulase C) family.

The protein resides in the secreted. The catalysed reaction is Endohydrolysis of (1-&gt;4)-beta-D-glucosidic linkages in cellulose, lichenin and cereal beta-D-glucans.. Functionally, has endoglucanase activity on substrates containing beta-1,4 glycosidic bonds, like in carboxymethylcellulose (CMC), hydroxyethylcellulose (HEC) and beta-glucan. Involved in the degradation of complex natural cellulosic substrates. This chain is Probable endo-beta-1,4-glucanase celB (celB), found in Aspergillus terreus (strain NIH 2624 / FGSC A1156).